Reading from the N-terminus, the 224-residue chain is Phosphoglycolate phosphatase (224 aa).

D11 (nucleophile) is an active-site residue. D11, D13, and D177 together coordinate Mg(2+).

This sequence belongs to the HAD-like hydrolase superfamily. CbbY/CbbZ/Gph/YieH family. Mg(2+) serves as cofactor.

It catalyses the reaction 2-phosphoglycolate + H2O = glycolate + phosphate. The protein operates within organic acid metabolism; glycolate biosynthesis; glycolate from 2-phosphoglycolate: step 1/1. In terms of biological role, specifically catalyzes the dephosphorylation of 2-phosphoglycolate. Is involved in the dissimilation of the intracellular 2-phosphoglycolate formed during the DNA repair of 3'-phosphoglycolate ends, a major class of DNA lesions induced by oxidative stress. This chain is Phosphoglycolate phosphatase, found in Haemophilus influenzae (strain ATCC 51907 / DSM 11121 / KW20 / Rd).